A 660-amino-acid chain; its full sequence is Kinesin-like protein KIF22 (660 aa).

Residues 1–31 (MSLRAKTCPQRREMASATSGPGRCVSKGGLG) are disordered. A Kinesin motor domain is found at 38 to 363 (RVRVAVRLRP…LNFTARSKEV (326 aa)). 122 to 129 (GPTGAGKT) is an ATP binding site. Residues 391-418 (PSEAKKAKGPEEESTGSPESTAAPASAS) form a disordered region. Over residues 405 to 418 (TGSPESTAAPASAS) the composition is skewed to low complexity. Phosphoserine is present on residues S407, S422, and S447. K460 is covalently cross-linked (Glycyl lysine isopeptide (Lys-Gly) (interchain with G-Cter in SUMO2)). Residues 460–505 (KRERMVLMKTVEEKNLEIERLKMKQKELEAKVLAQEAPDPREKENT) are a coiled coil. Disordered stretches follow at residues 493 to 516 (AQEAPDPREKENTPTILQPPASYS) and 534 to 567 (IQKQRESSNQIQLLKKGPKRKLEPSPESEAVEKD). A compositionally biased stretch (polar residues) spans 505–516 (TPTILQPPASYS). S540 and S576 each carry phosphoserine.

This sequence belongs to the TRAFAC class myosin-kinesin ATPase superfamily. Kinesin family. Interacts with FAM83D and SIAH1. In terms of processing, ubiquitinated; mediated by SIAH1 and leading to its subsequent proteasomal degradation.

It localises to the nucleus. Its subcellular location is the cytoplasm. The protein resides in the cytoskeleton. Kinesin family member that is involved in spindle formation and the movements of chromosomes during mitosis and meiosis. Binds to microtubules and to DNA. Plays a role in congression of laterally attached chromosomes in NDC80-depleted cells. The sequence is that of Kinesin-like protein KIF22 (Kif22) from Mus musculus (Mouse).